We begin with the raw amino-acid sequence, 372 residues long: Fatty acid 2-hydroxylase (372 aa).

In terms of domain architecture, Cytochrome b5 heme-binding spans 8–86 (AASFTSAEVQ…LEQYYVGELR (79 aa)). Positions 43 and 69 each coordinate heme. Helical transmembrane passes span 168–188 (VWYSVPIIWVPLVLYLSWSYY) and 213–233 (SVFIGLFVLGMLIWTLVEYLI). The region spanning 219-361 (FVLGMLIWTL…TKLWDYFFHT (143 aa)) is the Fatty acid hydroxylase domain. The Zn(2+) site is built by histidine 234, histidine 239, histidine 257, histidine 260, and histidine 261. The next 2 membrane-spanning stretches (helical) occupy residues 268–288 (SRLVFPPVPASVVVAFFYVFL) and 290–310 (LILPEAVAGILFAGGLLGYVL). Residues histidine 315, histidine 319, histidine 336, histidine 339, and histidine 340 each coordinate Zn(2+).

The protein belongs to the sterol desaturase family. SCS7 subfamily. Zn(2+) is required as a cofactor. Detected in oligodendrocytes (at protein level). Detected in sciatic nerve.

The protein localises to the endoplasmic reticulum membrane. It localises to the microsome membrane. The enzyme catalyses a 1,2-saturated fatty acid + 2 Fe(II)-[cytochrome b5] + O2 + 2 H(+) = a (R)-2-hydroxy fatty acid + 2 Fe(III)-[cytochrome b5] + H2O. It carries out the reaction hexadecanoate + 2 Fe(II)-[cytochrome b5] + O2 + 2 H(+) = (R)-2-hydroxyhexadecanoate + 2 Fe(III)-[cytochrome b5] + H2O. The catalysed reaction is octadecanoate + 2 Fe(II)-[cytochrome b5] + O2 + 2 H(+) = (R)-2-hydroxyoctadecanoate + 2 Fe(III)-[cytochrome b5] + H2O. It catalyses the reaction docosanoate + 2 Fe(II)-[cytochrome b5] + O2 + 2 H(+) = 2-hydroxydocosanoate + 2 Fe(III)-[cytochrome b5] + H2O. The enzyme catalyses tetracosanoate + 2 Fe(II)-[cytochrome b5] + O2 + 2 H(+) = (R)-2-hydroxytetracosanoate + 2 Fe(III)-[cytochrome b5] + H2O. It participates in lipid metabolism; fatty acid metabolism. The protein operates within sphingolipid metabolism; galactosylceramide biosynthesis. Catalyzes the hydroxylation of free fatty acids at the C-2 position to produce 2-hydroxy fatty acids, which are building blocks of sphingolipids and glycosphingolipids common in neural tissue and epidermis. FA2H is stereospecific for the production of (R)-2-hydroxy fatty acids. Plays an essential role in the synthesis of galactosphingolipids of the myelin sheath. Responsible for the synthesis of sphingolipids and glycosphingolipids involved in the formation of epidermal lamellar bodies critical for skin permeability barrier. Participates in the synthesis of glycosphingolipids and a fraction of type II wax diesters in sebaceous gland, specifically regulating hair follicle homeostasis. Involved in the synthesis of sphingolipids of plasma membrane rafts, controlling lipid raft mobility and trafficking of raft-associated proteins. This is Fatty acid 2-hydroxylase from Rattus norvegicus (Rat).